A 255-amino-acid polypeptide reads, in one-letter code: Taurine import ATP-binding protein TauB (255 aa).

The ABC transporter domain maps to 2–229; it reads LQISHLYADY…RFVAGESSRS (228 aa). 34–41 contacts ATP; it reads GPSGCGKT.

The protein belongs to the ABC transporter superfamily. Taurine importer (TC 3.A.1.17.1) family. As to quaternary structure, the complex is composed of two ATP-binding proteins (TauB), two transmembrane proteins (TauC) and a solute-binding protein (TauA).

The protein resides in the cell inner membrane. The catalysed reaction is taurine(out) + ATP + H2O = taurine(in) + ADP + phosphate + H(+). Functionally, part of the ABC transporter complex TauABC involved in taurine import. Responsible for energy coupling to the transport system. The polypeptide is Taurine import ATP-binding protein TauB (Escherichia coli O157:H7).